Consider the following 86-residue polypeptide: Synergistic-like venom protein (86 aa).

Residues 1 to 21 form the signal peptide; the sequence is MKTLLLTLVVVTIVCLDLGYT. 4 cysteine pairs are disulfide-bonded: C24/C45, C38/C63, C67/C78, and C79/C84.

Belongs to the three-finger toxin family. Short-chain subfamily. Aminergic toxin sub-subfamily. In terms of tissue distribution, expressed by the venom gland.

It is found in the secreted. This chain is Synergistic-like venom protein, found in Dendroaspis angusticeps (Eastern green mamba).